A 330-amino-acid polypeptide reads, in one-letter code: Glucokinase (330 aa).

This sequence belongs to the ROK (NagC/XylR) family.

It localises to the cytoplasm. It catalyses the reaction D-glucose + ATP = D-glucose 6-phosphate + ADP + H(+). In Halalkalibacterium halodurans (strain ATCC BAA-125 / DSM 18197 / FERM 7344 / JCM 9153 / C-125) (Bacillus halodurans), this protein is Glucokinase (glcK).